The following is a 487-amino-acid chain: MEANKTTEGPQDTQDAKEQPSLEDTNAEDLYEATTHETPLQPSSSQKHFQPPEIHLETPASLNPDTKGAEGLQDSSVSGTPPVKSSSSGLLSLPPQLSPQSVTSLEKAIAEIPLEEFGYDSPISKVKEEPLQLSPTANIPEYGSPISEVQKESLEVSPTANIPEYGSPISEVQKEPLEVSSTANIPKYESPVSEVQKEPLEVSPTASIPESSHELTSDKVPQTQVPESEHFPKHSFSESPTQAKEDESTKEGEAGEDELAVGTSKIPAAKPGLRAKKKKEKRAGGVTSRPVVPAKRAELVEMAKAVHREQFDDQVNNLFQWEKDSTLKAIQTGIYIGWRCPHYLWDCFRIGDESKCFCGHLLREHQIISDLSVPCSVSQCRCLMFCFIPSRPEEVGEFWLKKRATFDPKAWRAQCRCKHTHEEHAATGAHPCRHRGCFCPSFESNFLCVACDRRWEEHETFFETGDTRRKGKRPYGANNIKNWHRTY.

Composition is skewed to polar residues over residues 1 to 13 (MEAN…PQDT) and 36 to 48 (HETP…SQKH). Disordered regions lie at residues 1–103 (MEAN…QSVT) and 132–289 (QLSP…VTSR). Low complexity predominate over residues 81–103 (PPVKSSSSGLLSLPPQLSPQSVT). 2 stretches are compositionally biased toward basic and acidic residues: residues 227–236 (ESEHFPKHSF) and 243–253 (AKEDESTKEGE). Serine 248 is modified (phosphoserine).

Belongs to the FAM221 family.

This is Protein FAM221B (Fam221b) from Mus musculus (Mouse).